The sequence spans 86 residues: Cytochrome c oxidase subunit 6B1 (86 aa).

Position 2 is an N-acetylalanine (A2). The CHCH domain occupies 27 to 73 (TRNCWQNYLDFHRCEKAMTAKGGDVSVCEWYRRVYKSLCPISWVSTW). Residues 30–40 (CWQNYLDFHRC) carry the Cx9C motif motif. Disulfide bonds link C30/C65 and C40/C54. Residues 54–65 (CEWYRRVYKSLC) carry the Cx10C motif motif. Position 62 is an N6-acetyllysine (K62).

It belongs to the cytochrome c oxidase subunit 6B family. As to quaternary structure, component of the cytochrome c oxidase (complex IV, CIV), a multisubunit enzyme composed of 14 subunits. The complex is composed of a catalytic core of 3 subunits MT-CO1, MT-CO2 and MT-CO3, encoded in the mitochondrial DNA, and 11 supernumerary subunits COX4I, COX5A, COX5B, COX6A, COX6B, COX6C, COX7A, COX7B, COX7C, COX8 and NDUFA4, which are encoded in the nuclear genome. The complex exists as a monomer or a dimer and forms supercomplexes (SCs) in the inner mitochondrial membrane with NADH-ubiquinone oxidoreductase (complex I, CI) and ubiquinol-cytochrome c oxidoreductase (cytochrome b-c1 complex, complex III, CIII), resulting in different assemblies (supercomplex SCI(1)III(2)IV(1) and megacomplex MCI(2)III(2)IV(2)).

Its subcellular location is the mitochondrion inner membrane. It participates in energy metabolism; oxidative phosphorylation. Its function is as follows. Component of the cytochrome c oxidase, the last enzyme in the mitochondrial electron transport chain which drives oxidative phosphorylation. The respiratory chain contains 3 multisubunit complexes succinate dehydrogenase (complex II, CII), ubiquinol-cytochrome c oxidoreductase (cytochrome b-c1 complex, complex III, CIII) and cytochrome c oxidase (complex IV, CIV), that cooperate to transfer electrons derived from NADH and succinate to molecular oxygen, creating an electrochemical gradient over the inner membrane that drives transmembrane transport and the ATP synthase. Cytochrome c oxidase is the component of the respiratory chain that catalyzes the reduction of oxygen to water. Electrons originating from reduced cytochrome c in the intermembrane space (IMS) are transferred via the dinuclear copper A center (CU(A)) of subunit 2 and heme A of subunit 1 to the active site in subunit 1, a binuclear center (BNC) formed by heme A3 and copper B (CU(B)). The BNC reduces molecular oxygen to 2 water molecules using 4 electrons from cytochrome c in the IMS and 4 protons from the mitochondrial matrix. The polypeptide is Cytochrome c oxidase subunit 6B1 (COX6B1) (Carlito syrichta (Philippine tarsier)).